Reading from the N-terminus, the 609-residue chain is Kelch-like protein 20 (609 aa).

Positions 68–135 (CDVVLVVGAK…AYTSQITVEE (68 aa)) constitute a BTB domain. Positions 170–272 (CLGIRAFADT…SPKFLVGTVG (103 aa)) constitute a BACK domain. 6 Kelch repeats span residues 319–365 (VLFA…VLDD), 367–413 (LYAV…VLGG), 414–460 (FLYA…VLGG), 462–507 (LYAV…VYQD), 509–554 (IYAV…VVNG), and 556–601 (LMAV…VIKM).

In terms of assembly, component of the BCR(KLHL20) E3 ubiquitin ligase complex, at least composed of CUL3, KLHL20 and RBX1. Interacts with PDZ-RhoGEF/ARHGEF11, DAPK1, PML and CORO7. Interacts with F-actin. Interacts with IFN-gamma (IFNG). Interacts (via kelch repeats) with IVNS1ABP (via kelch repeats); this interaction blocks the assembly of CUL3-KLHL20 complex.

It localises to the cytoplasm. It is found in the perinuclear region. Its subcellular location is the nucleus. The protein localises to the golgi apparatus. The protein resides in the trans-Golgi network. It localises to the cell projection. It is found in the axon. Its subcellular location is the dendrite. Its pathway is protein modification; protein ubiquitination. In terms of biological role, substrate-specific adapter of a BCR (BTB-CUL3-RBX1) E3 ubiquitin-protein ligase complex involved in interferon response and anterograde Golgi to endosome transport. The BCR(KLHL20) E3 ubiquitin ligase complex mediates the ubiquitination of DAPK1, leading to its degradation by the proteasome, thereby acting as a negative regulator of apoptosis. The BCR(KLHL20) E3 ubiquitin ligase complex also specifically mediates 'Lys-33'-linked ubiquitination. Involved in anterograde Golgi to endosome transport by mediating 'Lys-33'-linked ubiquitination of CORO7, promoting interaction between CORO7 and EPS15, thereby facilitating actin polymerization and post-Golgi trafficking. Also acts as a regulator of endothelial migration during angiogenesis by controlling the activation of Rho GTPases. The BCR(KLHL20) E3 ubiquitin ligase complex acts as a regulator of neurite outgrowth by mediating ubiquitination and degradation of PDZ-RhoGEF/ARHGEF11. The protein is Kelch-like protein 20 (KLHL20) of Bos taurus (Bovine).